Consider the following 30-residue polypeptide: Arsenate respiratory reductase iron-sulfur subunit ArrB (30 aa).

Positions 12, 15, 18, and 22 each coordinate [4Fe-4S] cluster.

As to quaternary structure, heterodimer composed of one large subunit (ArrA) and one small subunit (ArrB). The cofactor is [4Fe-4S] cluster.

It localises to the periplasm. Its function is as follows. Component of the arsenate respiratory reductase (Arr) complex, which catalyzes the reduction of arsenate (As(V)) to arsenite (As(III)). ArrB is probably the electron transfer subunit. In Chrysiogenes arsenatis, this protein is Arsenate respiratory reductase iron-sulfur subunit ArrB.